Consider the following 255-residue polypeptide: Wtf element wtf15 (255 aa).

The disordered stretch occupies residues 19 to 78 (KAGHEIDLEGSPPSEHNSEEKSTLPSNSDILTSANPVSQASETPDHSIESNTGSTQSPTS). Polar residues-rich tracts occupy residues 41-60 (TLPS…QASE) and 67-78 (ESNTGSTQSPTS). Helical transmembrane passes span 85 to 105 (FSFC…CVLP), 112 to 132 (FLIA…SGSI), and 162 to 182 (FLKT…LVLL).

Belongs to the WTF family.

Its subcellular location is the spore membrane. May act in meiotic drive. The chain is Wtf element wtf15 from Schizosaccharomyces kambucha (Fission yeast).